A 303-amino-acid chain; its full sequence is Centromere protein O (303 aa).

The stretch at A38 to A77 forms a coiled coil.

The protein belongs to the CENP-O/MCM21 family.

The protein resides in the nucleus. It localises to the chromosome. It is found in the centromere. Its function is as follows. Probable component of a centromeric complex involved in assembly of kinetochore proteins, mitotic progression and chromosome segregation. The sequence is that of Centromere protein O (cenpo) from Xenopus tropicalis (Western clawed frog).